We begin with the raw amino-acid sequence, 148 residues long: Large ribosomal subunit protein uL13 (148 aa).

The protein belongs to the universal ribosomal protein uL13 family. In terms of assembly, part of the 50S ribosomal subunit.

This protein is one of the early assembly proteins of the 50S ribosomal subunit, although it is not seen to bind rRNA by itself. It is important during the early stages of 50S assembly. The sequence is that of Large ribosomal subunit protein uL13 from Lacticaseibacillus casei (strain BL23) (Lactobacillus casei).